A 470-amino-acid chain; its full sequence is Ribulose bisphosphate carboxylase large chain (470 aa).

Positions 115 and 165 each coordinate substrate. Lys-167 (proton acceptor) is an active-site residue. Lys-169 is a binding site for substrate. Mg(2+)-binding residues include Lys-193, Asp-195, and Glu-196. Lys-193 is modified (N6-carboxylysine). His-286 (proton acceptor) is an active-site residue. The substrate site is built by Arg-287, His-319, and Ser-371.

This sequence belongs to the RuBisCO large chain family. Type I subfamily. In terms of assembly, heterohexadecamer of 8 large chains and 8 small chains. Forms a CsoS2-CsoS1-RuBisCO complex. Requires Mg(2+) as cofactor.

It is found in the carboxysome. It catalyses the reaction 2 (2R)-3-phosphoglycerate + 2 H(+) = D-ribulose 1,5-bisphosphate + CO2 + H2O. The catalysed reaction is D-ribulose 1,5-bisphosphate + O2 = 2-phosphoglycolate + (2R)-3-phosphoglycerate + 2 H(+). In terms of biological role, ruBisCO catalyzes two reactions: the carboxylation of D-ribulose 1,5-bisphosphate, the primary event in carbon dioxide fixation, as well as the oxidative fragmentation of the pentose substrate in the photorespiration process. Both reactions occur simultaneously and in competition at the same active site. The polypeptide is Ribulose bisphosphate carboxylase large chain (Prochlorococcus marinus (strain MIT 9313)).